Here is a 389-residue protein sequence, read N- to C-terminus: Phospho-N-acetylmuramoyl-pentapeptide-transferase (389 aa).

The next 10 membrane-spanning stretches (helical) occupy residues 25-45, 74-94, 97-117, 134-154, 190-210, 222-242, 259-279, 286-306, 311-331, and 366-386; these read RAVMANLTALVIGLAAGPWVI, MGGVLVLVSIAISTVLWCDWG, FIWVVMLVTLGYGAIGWVDDY, FFWQTLIGLVAAVYLAFSVSE, VSYPLGVAGFIVLTYLVIVGS, GLVIMPVVLVGGALGAFAYVM, AGELLIFCSAMAGAGLAFLWF, VFMGDVGALALGGALGTVAVI, IVLFVMGGIFVVETVSVMLQV, and QVTVRFWIVTMLLVLIGLSTL.

This sequence belongs to the glycosyltransferase 4 family. MraY subfamily. Mg(2+) is required as a cofactor.

The protein localises to the cell inner membrane. The enzyme catalyses UDP-N-acetyl-alpha-D-muramoyl-L-alanyl-gamma-D-glutamyl-meso-2,6-diaminopimeloyl-D-alanyl-D-alanine + di-trans,octa-cis-undecaprenyl phosphate = di-trans,octa-cis-undecaprenyl diphospho-N-acetyl-alpha-D-muramoyl-L-alanyl-D-glutamyl-meso-2,6-diaminopimeloyl-D-alanyl-D-alanine + UMP. The protein operates within cell wall biogenesis; peptidoglycan biosynthesis. Functionally, catalyzes the initial step of the lipid cycle reactions in the biosynthesis of the cell wall peptidoglycan: transfers peptidoglycan precursor phospho-MurNAc-pentapeptide from UDP-MurNAc-pentapeptide onto the lipid carrier undecaprenyl phosphate, yielding undecaprenyl-pyrophosphoryl-MurNAc-pentapeptide, known as lipid I. This Cupriavidus pinatubonensis (strain JMP 134 / LMG 1197) (Cupriavidus necator (strain JMP 134)) protein is Phospho-N-acetylmuramoyl-pentapeptide-transferase.